The primary structure comprises 569 residues: Glycylpeptide N-tetradecanoyltransferase (569 aa).

Residues 1-18 are compositionally biased toward basic and acidic residues; sequence MPPTEESKPVDPAQEKQA. Residues 1 to 82 form a disordered region; sequence MPPTEESKPV…STESSAEVGL (82 aa). Residues 55-68 are compositionally biased toward basic residues; that stretch reads TKKKNKKKSKKKNK. Tetradecanoyl-CoA-binding positions include 158–161, 291–293, and 299–303; these read YKFW, LCI, and GKRLA. Val-569 serves as the catalytic Proton acceptor; via carboxylate.

Belongs to the NMT family. As to quaternary structure, monomer.

The protein resides in the cytoplasm. The enzyme catalyses N-terminal glycyl-[protein] + tetradecanoyl-CoA = N-tetradecanoylglycyl-[protein] + CoA + H(+). Its function is as follows. Adds a myristoyl group to the N-terminal glycine residue of certain cellular proteins. This chain is Glycylpeptide N-tetradecanoyltransferase (gtt-1), found in Neurospora crassa (strain ATCC 24698 / 74-OR23-1A / CBS 708.71 / DSM 1257 / FGSC 987).